We begin with the raw amino-acid sequence, 354 residues long: UDP-3-O-acylglucosamine N-acyltransferase (354 aa).

H245 acts as the Proton acceptor in catalysis.

The protein belongs to the transferase hexapeptide repeat family. LpxD subfamily. In terms of assembly, homotrimer.

It carries out the reaction a UDP-3-O-[(3R)-3-hydroxyacyl]-alpha-D-glucosamine + a (3R)-hydroxyacyl-[ACP] = a UDP-2-N,3-O-bis[(3R)-3-hydroxyacyl]-alpha-D-glucosamine + holo-[ACP] + H(+). It functions in the pathway bacterial outer membrane biogenesis; LPS lipid A biosynthesis. In terms of biological role, catalyzes the N-acylation of UDP-3-O-acylglucosamine using 3-hydroxyacyl-ACP as the acyl donor. Is involved in the biosynthesis of lipid A, a phosphorylated glycolipid that anchors the lipopolysaccharide to the outer membrane of the cell. In Anaeromyxobacter sp. (strain K), this protein is UDP-3-O-acylglucosamine N-acyltransferase.